The primary structure comprises 608 residues: MATITASHFVSHVCGGATSGESKVGLGQLALRSQAVTHNGLRPVNKIDMLQLRTSAKKPSKNGRENEGGMAAGTIVCKQQGMNLVFVGCEVGPWCKTGGLGDVLGGLPPALAARGHRVMTVCPRYDQYKDAWDTCVVVELQVGDRIEPVRFFHSYKRGVDRVFVDHPMFLEKVWGKTGSMLYGPKAGKDYKDNQLRFSLLCQAALEAPRVLNLNSSNYFSGPYGEDVVFVANDWHTALLPCYLKTMYQSRGIYMNAKVAFCIHNIAYQGRFAFSDFSLLNLPDEYKGSFDFIDGYDKPVKGRKINWMKAGIREADRVFTVSPNYAKELVSCVSKGVELDNHIRDCGITGICNGMDTQEWNPATDKYLAVKYDITTVMQAKPLLKEALQAAVGLPVDRNIPLIGFIGRLEEQKGSDILYAAISKFISMDVQILILGTGKKKFEQQIEQLEVMYPDKARGVAKFNVPLAHMITAGADFMLIPSRFEPCGLIQLHAMRYGTPCICASTGGLVDTVKEGYTGFHMGAFNVDCETVDPEDVLKVITTVGRALAMYGTLAFTEMIKNCMSQELSWKGPAKNWETVLLSLGVAGSEPGVEGDEIAPLAKENVATP.

A chloroplast-targeting transit peptide spans 1–76; that stretch reads MATITASHFV…EGGMAAGTIV (76 aa). K96 contributes to the ADP-alpha-D-glucose binding site.

Belongs to the glycosyltransferase 1 family. Bacterial/plant glycogen synthase subfamily.

It localises to the plastid. It is found in the chloroplast. Its subcellular location is the amyloplast. The catalysed reaction is an NDP-alpha-D-glucose + [(1-&gt;4)-alpha-D-glucosyl](n) = [(1-&gt;4)-alpha-D-glucosyl](n+1) + a ribonucleoside 5'-diphosphate + H(+). It participates in glycan biosynthesis; starch biosynthesis. In terms of biological role, required for the synthesis of amylose. This chain is Granule-bound starch synthase 1, chloroplastic/amyloplastic (WAXY), found in Ipomoea batatas (Sweet potato).